The chain runs to 282 residues: MPVSRFAVFGHPIAHSLSPRIHTEFGRQMGVALDYLAFDVAPDAFRVSLEHFVAEGGYGANVTLPLKEAAFEVCTTLSARARRAGAVNTLSRVDGVWHGENTDGIGLVRNLTERHGLDLRGRRALLLGAGGAARGVAPALLDAGITEMVIVNRSPERADMLCDALGEPGRVSARYWGDLGDLGNFELIVNATSIGNTSDMRTFSLPRSLLDSMTVAVDLNYGSAAVPFLAWAHAVETRYAIDGLGMLVEQAAESFSLWHGRRPDTDPVYTVLHSEYGVPGRS.

Shikimate contacts are provided by residues 16-18 and T63; that span reads SLS. The Proton acceptor role is filled by K67. 2 residues coordinate shikimate: N88 and D103. NADP(+) contacts are provided by residues 128-132 and L219; that span reads GAGGA. Shikimate is bound at residue Y221. G243 is an NADP(+) binding site.

This sequence belongs to the shikimate dehydrogenase family. Homodimer.

It catalyses the reaction shikimate + NADP(+) = 3-dehydroshikimate + NADPH + H(+). It functions in the pathway metabolic intermediate biosynthesis; chorismate biosynthesis; chorismate from D-erythrose 4-phosphate and phosphoenolpyruvate: step 4/7. In terms of biological role, involved in the biosynthesis of the chorismate, which leads to the biosynthesis of aromatic amino acids. Catalyzes the reversible NADPH linked reduction of 3-dehydroshikimate (DHSA) to yield shikimate (SA). This is Shikimate dehydrogenase (NADP(+)) from Xylella fastidiosa (strain M12).